We begin with the raw amino-acid sequence, 377 residues long: NADH dehydrogenase [ubiquinone] 1 alpha subcomplex subunit 9, mitochondrial (377 aa).

The transit peptide at 1-35 (MAAAVRFRVVRALPMSRPAITAAATSVFCGSSHRQ) directs the protein to the mitochondrion. Residue lysine 175 is modified to N6-succinyllysine. N6-acetyllysine occurs at positions 189 and 370.

Belongs to the complex I NDUFA9 subunit family. As to quaternary structure, complex I is composed of 45 different subunits. This a component of the hydrophobic protein fraction. Interacts with BLOC1S1. Interacts with SLC2A4. Interacts with CLOCK. Interacts with RAB5IF. It depends on FAD as a cofactor. Acetylated on lysine residues. BLOC1S1 is required for acetylation. Acetylated by CLOCK in a circadian manner.

The protein resides in the mitochondrion matrix. In terms of biological role, accessory subunit of the mitochondrial membrane respiratory chain NADH dehydrogenase (Complex I), that is believed not to be involved in catalysis. Complex I functions in the transfer of electrons from NADH to the respiratory chain. The immediate electron acceptor for the enzyme is believed to be ubiquinone. The polypeptide is NADH dehydrogenase [ubiquinone] 1 alpha subcomplex subunit 9, mitochondrial (Ndufa9) (Mus musculus (Mouse)).